The chain runs to 310 residues: tRNA uridine(34) hydroxylase (310 aa).

Residues 124–218 (SDPEVLLIDT…YFEEVPQEES (95 aa)) enclose the Rhodanese domain. C178 (cysteine persulfide intermediate) is an active-site residue.

Belongs to the TrhO family.

It catalyses the reaction uridine(34) in tRNA + AH2 + O2 = 5-hydroxyuridine(34) in tRNA + A + H2O. Functionally, catalyzes oxygen-dependent 5-hydroxyuridine (ho5U) modification at position 34 in tRNAs. This is tRNA uridine(34) hydroxylase from Pseudomonas putida (strain ATCC 700007 / DSM 6899 / JCM 31910 / BCRC 17059 / LMG 24140 / F1).